Consider the following 583-residue polypeptide: MTKKNAFKNSEDMKKYHLSEFNSEATSLTRPSPKSLQHVPCKFFRQGTCTSGKNCIFSHDLELATEKTICKYFQKGNCKFGSKCALEHVLPDGRKVKTRAFAPSTTAMGSSSQNISAAPMANIISNNDKILPMTTMASATASEEKNRIKDEALVIKKEESNVAIPSEVTVAANAFSASTEDVYSIVGDSLSKKASVKDFSDVTGIETIPAYVEATNGSSTVRSPHAKRSLSSISVKSSTSPFSGSKFLSSSSYPHTPEAHLNSNHISPASFGSGIRTRNIFNPESMSLGLKPPILNRSYSASMAPGFSMNTFTATGNLGRPTKSPSVPTSVGSNKSRKFPGINGSTLTATPSSLENLYPLSSRRSVPNLISSLGTSPSTFSSQFLKSTDRTHSFTSKLQSFNPVGTSLLASSLGTSQEDSVNYDIPDEFANEEDFIPNSLQELLTPEELERKMSHGDEAVSSSSASRFMSKVSSNLNSGNPTPYNSYNGTPTSSRFVAFFDRHRQESEKATPPSLNKVSQEPLTATTPKNLGNLTAISETLENGQTLKSNMASSIEKSKTSTEVVASYDTTLDEETQFQMDEA.

2 consecutive C3H1-type zinc fingers follow at residues 35-62 and 64-91; these read SLQH…HDLE and ATEK…HVLP. 3 disordered regions span residues 318 to 346, 471 to 490, and 504 to 532; these read LGRP…NGST, KVSS…YNGT, and RQES…KNLG. Composition is skewed to polar residues over residues 323 to 334, 475 to 490, and 513 to 532; these read KSPSVPTSVGSN, NLNS…YNGT, and PSLN…KNLG.

The protein localises to the cytoplasm. In terms of biological role, responsible for supersensitivity to the spindle poison, isopropyl N-3-chlorophenyl carbamate. Has a role in meiosis. This is Protein cps3 (cps3) from Schizosaccharomyces pombe (strain 972 / ATCC 24843) (Fission yeast).